The following is a 146-amino-acid chain: Large ribosomal subunit protein uL15 (146 aa).

Residues 1-13 (MKLHELKPAEGSR) show a composition bias toward basic and acidic residues. The disordered stretch occupies residues 1-65 (MKLHELKPAE…PLYRRLPKRG (65 aa)). Composition is skewed to gly residues over residues 21-31 (RGIGSGNGKTA) and 42-52 (SGGGVRPGFEG).

This sequence belongs to the universal ribosomal protein uL15 family. As to quaternary structure, part of the 50S ribosomal subunit.

Its function is as follows. Binds to the 23S rRNA. This is Large ribosomal subunit protein uL15 from Halalkalibacterium halodurans (strain ATCC BAA-125 / DSM 18197 / FERM 7344 / JCM 9153 / C-125) (Bacillus halodurans).